A 495-amino-acid polypeptide reads, in one-letter code: Histidine--tRNA ligase (495 aa).

Belongs to the class-II aminoacyl-tRNA synthetase family. Homodimer.

It localises to the cytoplasm. The enzyme catalyses tRNA(His) + L-histidine + ATP = L-histidyl-tRNA(His) + AMP + diphosphate + H(+). In Bartonella henselae (strain ATCC 49882 / DSM 28221 / CCUG 30454 / Houston 1) (Rochalimaea henselae), this protein is Histidine--tRNA ligase.